A 271-amino-acid polypeptide reads, in one-letter code: 4,5-DOPA dioxygenase extradiol (271 aa).

4 residues coordinate Zn(2+): H22, H57, H177, and H234.

Belongs to the DODA-type extradiol aromatic ring-opening dioxygenase family. In terms of assembly, monomer. Zn(2+) is required as a cofactor.

The protein localises to the cytoplasm. It carries out the reaction L-dopa + O2 = 4-(L-alanin-3-yl)-2-hydroxy-cis,cis-muconate 6-semialdehyde + H(+). In terms of biological role, in vitro, opens the cyclic ring of dihydroxy-phenylalanine (DOPA) between carbons 4 and 5, thus producing an unstable seco-DOPA that rearranges nonenzymatically to betalamic acid. The physiological substrate is unknown. This is 4,5-DOPA dioxygenase extradiol (ygiD) from Escherichia coli (strain K12).